The primary structure comprises 549 residues: Glucose-6-phosphate isomerase (549 aa).

Catalysis depends on glutamate 355, which acts as the Proton donor. Residues histidine 386 and lysine 514 contribute to the active site.

It belongs to the GPI family.

It localises to the cytoplasm. The catalysed reaction is alpha-D-glucose 6-phosphate = beta-D-fructose 6-phosphate. It participates in carbohydrate biosynthesis; gluconeogenesis. The protein operates within carbohydrate degradation; glycolysis; D-glyceraldehyde 3-phosphate and glycerone phosphate from D-glucose: step 2/4. Functionally, catalyzes the reversible isomerization of glucose-6-phosphate to fructose-6-phosphate. The chain is Glucose-6-phosphate isomerase from Edwardsiella ictaluri (strain 93-146).